A 560-amino-acid chain; its full sequence is Formate--tetrahydrofolate ligase (560 aa).

69 to 76 contributes to the ATP binding site; the sequence is TPAGEGKS.

This sequence belongs to the formate--tetrahydrofolate ligase family.

It catalyses the reaction (6S)-5,6,7,8-tetrahydrofolate + formate + ATP = (6R)-10-formyltetrahydrofolate + ADP + phosphate. It functions in the pathway one-carbon metabolism; tetrahydrofolate interconversion. The chain is Formate--tetrahydrofolate ligase from Listeria welshimeri serovar 6b (strain ATCC 35897 / DSM 20650 / CCUG 15529 / CIP 8149 / NCTC 11857 / SLCC 5334 / V8).